Reading from the N-terminus, the 60-residue chain is Large ribosomal subunit protein bL32 (60 aa).

A compositionally biased stretch (basic residues) spans 1–23; sequence MAKHPVPKKKTSKARRDARRSHH. A disordered region spans residues 1-30; it reads MAKHPVPKKKTSKARRDARRSHHALTPPTL.

Part of the 50S ribosomal subunit.

Its function is as follows. Found on the solvent side of the large subunit. The chain is Large ribosomal subunit protein bL32 (rpmF) from Thermus thermophilus (strain ATCC 27634 / DSM 579 / HB8).